A 535-amino-acid chain; its full sequence is Growth-regulating factor 2 (535 aa).

The region spanning 164–199 (PFTLTQWAELEQQALIYKYITANVPVPSSLLISIKK) is the QLQ domain. Residues 227-271 (DPEPGRCRRTDGKKWRCSRDAVPDQKYCERHINRGRHRSRKPVEV) enclose the WRC domain. 2 consecutive short sequence motifs (bipartite nuclear localization signal) follow at residues 232–242 (RCRRTDGKKWR) and 260–267 (RGRHRSRK). Disordered stretches follow at residues 260 to 308 (RGRH…ASSN), 417 to 437 (PIAS…EKTT), and 514 to 535 (SSVS…HYTT). Positions 272 to 291 (QSGQNQTAAAASKAVTTPQQ) are enriched in polar residues. Residues 299 to 308 (NRSNARASSN) show a composition bias toward low complexity. Residues 426–437 (THNNNNAQEKTT) are compositionally biased toward polar residues.

The protein belongs to the GRF family. Interacts with GIF1. Strongly expressed in actively growing and developing tissues, such as roots, upper stems, and shoot tips containing the shoot apical meristem (SAM) and flower buds. Detected in young leaf primordium. Also expressed in mature flowers, but weakly expressed in mature stems and leaves.

It localises to the nucleus. Functionally, transcription activator that plays a role in the regulation of cell expansion in leaf and cotyledons tissues. Component of a network formed by miR396, the GRFs and their interacting factors (GIFs) acting in the regulation of meristem function, at least partially through the control of cell proliferation. The protein is Growth-regulating factor 2 (GRF2) of Arabidopsis thaliana (Mouse-ear cress).